We begin with the raw amino-acid sequence, 550 residues long: ATP synthase subunit alpha (550 aa).

172 to 179 (GDRKTGKT) is a binding site for ATP. Residues 521 to 550 (EPAAEPLAGEEDRETVTRFHDDATDRPAGS) are disordered. Basic and acidic residues predominate over residues 534–550 (ETVTRFHDDATDRPAGS).

The protein belongs to the ATPase alpha/beta chains family. As to quaternary structure, F-type ATPases have 2 components, CF(1) - the catalytic core - and CF(0) - the membrane proton channel. CF(1) has five subunits: alpha(3), beta(3), gamma(1), delta(1), epsilon(1). CF(0) has three main subunits: a(1), b(2) and c(9-12). The alpha and beta chains form an alternating ring which encloses part of the gamma chain. CF(1) is attached to CF(0) by a central stalk formed by the gamma and epsilon chains, while a peripheral stalk is formed by the delta and b chains.

The protein resides in the cell membrane. The enzyme catalyses ATP + H2O + 4 H(+)(in) = ADP + phosphate + 5 H(+)(out). Functionally, produces ATP from ADP in the presence of a proton gradient across the membrane. The alpha chain is a regulatory subunit. In Salinispora tropica (strain ATCC BAA-916 / DSM 44818 / JCM 13857 / NBRC 105044 / CNB-440), this protein is ATP synthase subunit alpha.